The primary structure comprises 130 residues: Large ribosomal subunit protein bL20 (130 aa).

The protein belongs to the bacterial ribosomal protein bL20 family.

Its function is as follows. Binds directly to 23S ribosomal RNA and is necessary for the in vitro assembly process of the 50S ribosomal subunit. It is not involved in the protein synthesizing functions of that subunit. In Leifsonia xyli subsp. xyli (strain CTCB07), this protein is Large ribosomal subunit protein bL20.